The chain runs to 418 residues: Tryptophan synthase beta chain (418 aa).

Positions 1–18 are enriched in polar residues; it reads MTSTLPKASQPDPSSLQP. Residues 1 to 28 are disordered; sequence MTSTLPKASQPDPSSLQPSARPGAHGRF. Position 111 is an N6-(pyridoxal phosphate)lysine (Lys111).

This sequence belongs to the TrpB family. Tetramer of two alpha and two beta chains. Requires pyridoxal 5'-phosphate as cofactor.

It carries out the reaction (1S,2R)-1-C-(indol-3-yl)glycerol 3-phosphate + L-serine = D-glyceraldehyde 3-phosphate + L-tryptophan + H2O. Its pathway is amino-acid biosynthesis; L-tryptophan biosynthesis; L-tryptophan from chorismate: step 5/5. In terms of biological role, the beta subunit is responsible for the synthesis of L-tryptophan from indole and L-serine. The sequence is that of Tryptophan synthase beta chain from Synechococcus sp. (strain CC9902).